Here is a 314-residue protein sequence, read N- to C-terminus: tRNA dimethylallyltransferase (314 aa).

13–20 lines the ATP pocket; it reads GPTAVGKT. Residue 15-20 coordinates substrate; sequence TAVGKT. The interval 38–41 is interaction with substrate tRNA; sequence DSMQ.

Belongs to the IPP transferase family. Monomer. It depends on Mg(2+) as a cofactor.

The enzyme catalyses adenosine(37) in tRNA + dimethylallyl diphosphate = N(6)-dimethylallyladenosine(37) in tRNA + diphosphate. In terms of biological role, catalyzes the transfer of a dimethylallyl group onto the adenine at position 37 in tRNAs that read codons beginning with uridine, leading to the formation of N6-(dimethylallyl)adenosine (i(6)A). This Bacillus licheniformis (strain ATCC 14580 / DSM 13 / JCM 2505 / CCUG 7422 / NBRC 12200 / NCIMB 9375 / NCTC 10341 / NRRL NRS-1264 / Gibson 46) protein is tRNA dimethylallyltransferase.